We begin with the raw amino-acid sequence, 100 residues long: MFAIIRTGGKQIKVEQGQEIFIEKIKGEVNDKIAFDEILMIDGKIGTPTIKGAKVLGTIIKQGKAKKIRVIRYHPKKNVNKIYGHRQPYTKVKIDEISAK.

Belongs to the bacterial ribosomal protein bL21 family. In terms of assembly, part of the 50S ribosomal subunit. Contacts protein L20.

Its function is as follows. This protein binds to 23S rRNA in the presence of protein L20. The sequence is that of Large ribosomal subunit protein bL21 from Mycoplasma mycoides subsp. mycoides SC (strain CCUG 32753 / NCTC 10114 / PG1).